Here is a 260-residue protein sequence, read N- to C-terminus: Malonyl-[acyl-carrier protein] O-methyltransferase (260 aa).

The protein belongs to the methyltransferase superfamily.

The catalysed reaction is malonyl-[ACP] + S-adenosyl-L-methionine = malonyl-[ACP] methyl ester + S-adenosyl-L-homocysteine. Its pathway is cofactor biosynthesis; biotin biosynthesis. Its function is as follows. Converts the free carboxyl group of a malonyl-thioester to its methyl ester by transfer of a methyl group from S-adenosyl-L-methionine (SAM). It allows to synthesize pimeloyl-ACP via the fatty acid synthetic pathway. The sequence is that of Malonyl-[acyl-carrier protein] O-methyltransferase from Chlorobium phaeovibrioides (strain DSM 265 / 1930) (Prosthecochloris vibrioformis (strain DSM 265)).